The primary structure comprises 172 residues: Counting factor-associated protein B (172 aa).

The signal sequence occupies residues 1–21; the sequence is MKLLNSLILLVLTCLVSSINT. Asn37 and Asn153 each carry an N-linked (GlcNAc...) asparagine glycan.

Its subcellular location is the secreted. The chain is Counting factor-associated protein B (cfaB) from Dictyostelium discoideum (Social amoeba).